A 120-amino-acid polypeptide reads, in one-letter code: uncharacterized protein (120 aa).

Helical transmembrane passes span 9–29 (WPDFLSVVLLALLLWISLFCG), 32–52 (ALMFCCASVFSVALCVAADCL), 68–88 (FVWPLTWLGSLSGLGLAVMAT), and 94–114 (GPEHVIWALAGLLTFWLSFRF).

It localises to the membrane. This is an uncharacterized protein from Escherichia phage Mu (Bacteriophage Mu).